A 149-amino-acid chain; its full sequence is Small ribosomal subunit protein uS13 (149 aa).

Positions 118–149 are disordered; sequence GRRHELGLPVRGQRTKSTFRKGSSVGVRRKKR.

Belongs to the universal ribosomal protein uS13 family. Part of the 30S ribosomal subunit. Forms a loose heterodimer with protein S19. Forms two bridges to the 50S subunit in the 70S ribosome.

Its function is as follows. Located at the top of the head of the 30S subunit, it contacts several helices of the 16S rRNA. In the 70S ribosome it contacts the 23S rRNA (bridge B1a) and protein L5 of the 50S subunit (bridge B1b), connecting the 2 subunits; these bridges are implicated in subunit movement. In Methanothermobacter thermautotrophicus (strain ATCC 29096 / DSM 1053 / JCM 10044 / NBRC 100330 / Delta H) (Methanobacterium thermoautotrophicum), this protein is Small ribosomal subunit protein uS13.